We begin with the raw amino-acid sequence, 478 residues long: Cysteine protease ATG4B (478 aa).

A compositionally biased stretch (polar residues) spans 1 to 15 (MTSLPDRGVSSSSSD). Positions 1–20 (MTSLPDRGVSSSSSDPLCEG) are disordered. The active-site Nucleophile is the C164. Active-site residues include D361 and H363.

The protein belongs to the peptidase C54 family. In terms of assembly, interacts with ATG8. Constitutively expressed.

It localises to the cytoplasm. It catalyses the reaction [protein]-C-terminal L-amino acid-glycyl-phosphatidylethanolamide + H2O = [protein]-C-terminal L-amino acid-glycine + a 1,2-diacyl-sn-glycero-3-phosphoethanolamine. Functionally, cysteine protease that plays a key role in autophagy by mediating both proteolytic activation and delipidation of ATG8 family proteins. The protease activity is required for proteolytic activation of ATG8 family proteins: cleaves the C-terminal amino acid of ATG8 proteins to reveal a C-terminal glycine. Exposure of the glycine at the C-terminus is essential for ATG8 proteins conjugation to phosphatidylethanolamine (PE) and insertion to membranes, which is necessary for autophagy. In addition to the protease activity, also mediates delipidation of PE-conjugated ATG8 proteins. The protein is Cysteine protease ATG4B (ATG4B) of Oryza sativa subsp. indica (Rice).